The primary structure comprises 461 residues: Porin AaxA (461 aa).

The N-terminal stretch at 1–22 is a signal peptide; the sequence is MSFRSVLLTALLSLSFTTTMQA.

The protein belongs to the OprB family.

It localises to the cell outer membrane. Facilitates L-arginine uptake, as part of the AaxABC system. The arginine uptake by the bacterium in the macrophage may be a virulence factor against the host innate immune response. This is Porin AaxA (aaxA) from Chlamydia trachomatis serovar D (strain ATCC VR-885 / DSM 19411 / UW-3/Cx).